A 551-amino-acid chain; its full sequence is RCC1 and BTB domain-containing protein 2 (551 aa).

6 RCC1 repeats span residues Asn-64 to Thr-115, Glu-117 to Ser-169, Gly-171 to Asp-222, Thr-223 to Asp-274, Gly-276 to Thr-326, and Gly-328 to Glu-382. The BTB domain occupies Ala-394–Pro-457.

The protein localises to the cytoplasmic vesicle. It localises to the secretory vesicle. Its subcellular location is the acrosome. The sequence is that of RCC1 and BTB domain-containing protein 2 (RCBTB2) from Homo sapiens (Human).